Here is a 415-residue protein sequence, read N- to C-terminus: Gamma-glutamyl phosphate reductase (415 aa).

The protein belongs to the gamma-glutamyl phosphate reductase family.

Its subcellular location is the cytoplasm. It carries out the reaction L-glutamate 5-semialdehyde + phosphate + NADP(+) = L-glutamyl 5-phosphate + NADPH + H(+). The protein operates within amino-acid biosynthesis; L-proline biosynthesis; L-glutamate 5-semialdehyde from L-glutamate: step 2/2. Catalyzes the NADPH-dependent reduction of L-glutamate 5-phosphate into L-glutamate 5-semialdehyde and phosphate. The product spontaneously undergoes cyclization to form 1-pyrroline-5-carboxylate. This Leuconostoc citreum (strain KM20) protein is Gamma-glutamyl phosphate reductase.